The chain runs to 386 residues: Patatin-2-Kuras 2 (386 aa).

A signal peptide spans 1–23; sequence MATTKSFLILFFMILATTSSTCA. A PNPLA domain is found at 32-229; the sequence is LSIDGGGIKG…TVGDPALLSL (198 aa). The GXGXXG motif lies at 36 to 41; sequence GGGIKG. A GXSXG motif is present at residues 75–79; sequence GTSTG. Ser77 (nucleophile) is an active-site residue. Asn115 carries N-linked (GlcNAc...) asparagine glycosylation. The Proton acceptor role is filled by Asp215. The DGA/G signature appears at 215–217; the sequence is DGA. A coiled-coil region spans residues 321–384; the sequence is ENALTGTTTE…DRKKLRANKA (64 aa).

The protein belongs to the patatin family.

The protein localises to the vacuole. Its function is as follows. Probable lipolytic acyl hydrolase (LAH), an activity which is thought to be involved in the response of tubers to pathogens. This is Patatin-2-Kuras 2 (pat2-k2) from Solanum tuberosum (Potato).